We begin with the raw amino-acid sequence, 248 residues long: Pyridoxine 5'-phosphate synthase (248 aa).

N12 contributes to the 3-amino-2-oxopropyl phosphate binding site. Residue 14 to 15 participates in 1-deoxy-D-xylulose 5-phosphate binding; that stretch reads DH. R23 is a binding site for 3-amino-2-oxopropyl phosphate. Residue H48 is the Proton acceptor of the active site. Residues R50 and H55 each contribute to the 1-deoxy-D-xylulose 5-phosphate site. E75 functions as the Proton acceptor in the catalytic mechanism. Position 105 (T105) interacts with 1-deoxy-D-xylulose 5-phosphate. H196 functions as the Proton donor in the catalytic mechanism. 3-amino-2-oxopropyl phosphate is bound by residues G197 and 218–219; that span reads GH.

It belongs to the PNP synthase family. In terms of assembly, homooctamer; tetramer of dimers.

It is found in the cytoplasm. The enzyme catalyses 3-amino-2-oxopropyl phosphate + 1-deoxy-D-xylulose 5-phosphate = pyridoxine 5'-phosphate + phosphate + 2 H2O + H(+). The protein operates within cofactor biosynthesis; pyridoxine 5'-phosphate biosynthesis; pyridoxine 5'-phosphate from D-erythrose 4-phosphate: step 5/5. Its function is as follows. Catalyzes the complicated ring closure reaction between the two acyclic compounds 1-deoxy-D-xylulose-5-phosphate (DXP) and 3-amino-2-oxopropyl phosphate (1-amino-acetone-3-phosphate or AAP) to form pyridoxine 5'-phosphate (PNP) and inorganic phosphate. The polypeptide is Pyridoxine 5'-phosphate synthase (Pseudomonas paraeruginosa (strain DSM 24068 / PA7) (Pseudomonas aeruginosa (strain PA7))).